Here is a 161-residue protein sequence, read N- to C-terminus: 3-hydroxyacyl-[acyl-carrier-protein] dehydratase FabZ (161 aa).

His66 is a catalytic residue.

The protein belongs to the thioester dehydratase family. FabZ subfamily.

The protein localises to the cytoplasm. It catalyses the reaction a (3R)-hydroxyacyl-[ACP] = a (2E)-enoyl-[ACP] + H2O. Functionally, involved in unsaturated fatty acids biosynthesis. Catalyzes the dehydration of short chain beta-hydroxyacyl-ACPs and long chain saturated and unsaturated beta-hydroxyacyl-ACPs. The chain is 3-hydroxyacyl-[acyl-carrier-protein] dehydratase FabZ from Gluconacetobacter diazotrophicus (strain ATCC 49037 / DSM 5601 / CCUG 37298 / CIP 103539 / LMG 7603 / PAl5).